We begin with the raw amino-acid sequence, 434 residues long: Histidinol dehydrogenase (434 aa).

The NAD(+) site is built by Tyr-130, Gln-188, and Asn-211. Residues Ser-237, Gln-259, and His-262 each coordinate substrate. The Zn(2+) site is built by Gln-259 and His-262. Active-site proton acceptor residues include Glu-326 and His-327. Residues His-327, Asp-360, Glu-414, and His-419 each contribute to the substrate site. Position 360 (Asp-360) interacts with Zn(2+). His-419 contributes to the Zn(2+) binding site.

The protein belongs to the histidinol dehydrogenase family. As to quaternary structure, homodimer. Requires Zn(2+) as cofactor.

It carries out the reaction L-histidinol + 2 NAD(+) + H2O = L-histidine + 2 NADH + 3 H(+). The protein operates within amino-acid biosynthesis; L-histidine biosynthesis; L-histidine from 5-phospho-alpha-D-ribose 1-diphosphate: step 9/9. Its function is as follows. Catalyzes the sequential NAD-dependent oxidations of L-histidinol to L-histidinaldehyde and then to L-histidine. This is Histidinol dehydrogenase from Escherichia coli O157:H7.